A 473-amino-acid chain; its full sequence is MNINMKDNFKKWLDLQQKKTLLKFLTCGSVDDGKSTLIGRLLHDTKQIYDDQLFFLKSDSKRHGTQGNEIDLALVVDGLQSEREQGITIDVAYRYFSTNKRKFIIADTPGHEQYTRNMATGASTCDLSILLVDARKGLSEQTYRHSFISTLLGIKYLIVAINKMDLVNYKQEIFENIKKDFLIFSKKLANDLNIIFIPMSALLGENIVFKTKLMPWYQGVTLLSFLETIKIKNSISSEELRFPVQYINRPNADFRGYSGILLSGRMHVGQTIKILPENINSRVSRIVTFDKELKKAEIGESITVVLKDEIDINRGDFFVNIDSILQPSQEAIIDIVWMTDNILLAGESYNVKLSGKKIRVYIKEILFKLDVNTLKKVKSHSLVLNSIGRVKIYFSKPVIFDNYSENRMTGNMIFIDLLTNITVGAGMIVNSLDKKGKIPSNKQKDFESDFYDLITRHFPHWNIPKILMKKVYK.

One can recognise a tr-type G domain in the interval 19–238; that stretch reads KTLLKFLTCG…IKIKNSISSE (220 aa). A G1 region spans residues 28–35; sequence GSVDDGKS. Position 28–35 (28–35) interacts with GTP; it reads GSVDDGKS. Positions 86-90 are G2; sequence GITID. Residues 107–110 are G3; the sequence is DTPG. Residues 107–111 and 162–165 each bind GTP; these read DTPGH and NKMD. The G4 stretch occupies residues 162–165; sequence NKMD. Residues 200-202 are G5; sequence SAL.

This sequence belongs to the TRAFAC class translation factor GTPase superfamily. Classic translation factor GTPase family. CysN/NodQ subfamily. In terms of assembly, heterodimer composed of CysD, the smaller subunit, and CysN.

It carries out the reaction sulfate + ATP + H(+) = adenosine 5'-phosphosulfate + diphosphate. It functions in the pathway sulfur metabolism; hydrogen sulfide biosynthesis; sulfite from sulfate: step 1/3. Its function is as follows. With CysD forms the ATP sulfurylase (ATPS) that catalyzes the adenylation of sulfate producing adenosine 5'-phosphosulfate (APS) and diphosphate, the first enzymatic step in sulfur assimilation pathway. APS synthesis involves the formation of a high-energy phosphoric-sulfuric acid anhydride bond driven by GTP hydrolysis by CysN coupled to ATP hydrolysis by CysD. In Buchnera aphidicola subsp. Acyrthosiphon pisum (strain 5A), this protein is Sulfate adenylyltransferase subunit 1.